Reading from the N-terminus, the 523-residue chain is Synaptotagmin-10 (523 aa).

Residues 1–55 (MSFHKEDGVNSLCQKALHIVTELCFAGQVEWEKCSGIFPRDRGSQGGSSTDISVS) lie on the Vesicular side of the membrane. A cysteine motif region spans residues 13–35 (CQKALHIVTELCFAGQVEWEKCS). A helical transmembrane segment spans residues 56–76 (LLAVVVSFCGLALLVVSLFVF). The Cytoplasmic segment spans residues 77–523 (WKLCWPCWKS…CPSPKPPSTP (447 aa)). Threonine 136 bears the Phosphothreonine mark. 2 consecutive C2 domains span residues 231–352 (ICGK…TVWK) and 363–496 (DLGE…THWH). The Ca(2+) site is built by aspartate 262, aspartate 268, aspartate 320, phenylalanine 321, aspartate 322, serine 325, aspartate 328, aspartate 394, aspartate 400, aspartate 454, and aspartate 456.

Belongs to the synaptotagmin family. In terms of assembly, homodimer; disulfide-linked via the cysteine motif. Can also form heterodimers with SYT3, SYT6, SYT7 and SYT9. The cofactor is Ca(2+). In terms of tissue distribution, expressed only in pancreas, lung and kidney.

Its subcellular location is the cytoplasmic vesicle. It localises to the secretory vesicle membrane. Its function is as follows. Ca(2+) sensor specifically required for the Ca(2+)-dependent exocytosis of secretory vesicles containing IGF1 in neurons of the olfactory bulb. Exocytosis of IGF1 is required for sensory perception of smell. Not involved in Ca(2+)-dependent synaptic vesicle exocytosis. Acts through Ca(2+) and phospholipid binding to the C2 domain: Ca(2+) induces binding of the C2-domains to phospholipid membranes and to assembled SNARE-complexes; both actions contribute to triggering exocytosis. This chain is Synaptotagmin-10 (SYT10), found in Homo sapiens (Human).